A 251-amino-acid polypeptide reads, in one-letter code: Triosephosphate isomerase (251 aa).

9–11 (NWK) serves as a coordination point for substrate. H95 serves as the catalytic Electrophile. E167 serves as the catalytic Proton acceptor. Residues G173, S212, and 233–234 (GG) contribute to the substrate site.

Belongs to the triosephosphate isomerase family. Homodimer.

Its subcellular location is the cytoplasm. It carries out the reaction D-glyceraldehyde 3-phosphate = dihydroxyacetone phosphate. It functions in the pathway carbohydrate biosynthesis; gluconeogenesis. Its pathway is carbohydrate degradation; glycolysis; D-glyceraldehyde 3-phosphate from glycerone phosphate: step 1/1. Functionally, involved in the gluconeogenesis. Catalyzes stereospecifically the conversion of dihydroxyacetone phosphate (DHAP) to D-glyceraldehyde-3-phosphate (G3P). This chain is Triosephosphate isomerase, found in Vibrio sp. (strain ANT-300).